Consider the following 258-residue polypeptide: Ciliogenesis and planar polarity effector 2 (258 aa).

The interval 51–258 is small GTPase-like; the sequence is IDTASYKIFV…LPSSPESAPG (208 aa). GTP contacts are provided by Ser-64, Gly-65, Gly-67, Lys-68, Thr-69, Ala-70, Ile-82, His-84, Thr-87, Lys-176, Asp-178, and Ser-206.

This sequence belongs to the small GTPase superfamily. Rab family. As to quaternary structure, interacts with FUZ. Associates with the CPLANE (ciliogenesis and planar polarity effectors) complex via its interaction with FUZ.

The protein localises to the cytoplasm. It localises to the cytoskeleton. The protein resides in the cilium basal body. Its subcellular location is the microtubule organizing center. It is found in the centrosome. The protein localises to the centriole. In terms of biological role, required for efficient primary cilia initiation, regulating a late step in cilia initiation. Plays a role in the final maturation of the mother centriole and ciliary vesicle that allows extension of the ciliary axoneme. The chain is Ciliogenesis and planar polarity effector 2 (Cplane2) from Mus musculus (Mouse).